A 314-amino-acid polypeptide reads, in one-letter code: ATP synthase gamma chain (314 aa).

It belongs to the ATPase gamma chain family. In terms of assembly, F-type ATPases have 2 components, CF(1) - the catalytic core - and CF(0) - the membrane proton channel. CF(1) has five subunits: alpha(3), beta(3), gamma(1), delta(1), epsilon(1). CF(0) has three main subunits: a, b and c.

It is found in the cell inner membrane. In terms of biological role, produces ATP from ADP in the presence of a proton gradient across the membrane. The gamma chain is believed to be important in regulating ATPase activity and the flow of protons through the CF(0) complex. The chain is ATP synthase gamma chain from Gloeobacter violaceus (strain ATCC 29082 / PCC 7421).